The primary structure comprises 190 residues: FMRFamide-related peptides (190 aa).

Positions 1 to 21 (MSCSRTVALLAALWLVVGATS) are cleaved as a signal peptide. Residues 22-33 (SPVRRSPDLEAR) constitute a propeptide that is removed on maturation. Phenylalanine amide is present on Phe45. Positions 69-104 (GNSFLRFGRSQPLTLSTDDLVSLLRAYEEDYDTPMT) are excised as a propeptide. At Phe113 the chain carries Phenylalanine amide. A propeptide spanning residues 116 to 150 (DPNFIRLGRSADDDKSAFEQNSELVVSGYPQRKSR) is cleaved from the precursor. At Leu158 the chain carries Leucine amide. Residues 160 to 190 (RDSEEVNENEFEETEESRRKRSADSCHDCQS) constitute a propeptide that is removed on maturation. The segment at 161 to 190 (DSEEVNENEFEETEESRRKRSADSCHDCQS) is disordered. The span at 164–174 (EVNENEFEETE) shows a compositional bias: acidic residues. A compositionally biased stretch (basic and acidic residues) spans 175-190 (ESRRKRSADSCHDCQS).

The protein belongs to the FARP (FMRFamide related peptide) family. In terms of tissue distribution, RFamide 1: Expressed in corpora cardiaca (CC), corpora allata (CA), antennal lobe (AL) and gnathal ganglion (GNG) (at protein level). Expression in AL detected in most animals, in CC, CA and in GNG in some animals (at protein level). RFamide precursor-related peptide 2: Expressed in corpora cardiaca (CC), corpora allata (CA), antennal lobe (AL) and gnathal ganglion (GNG) (at protein level). Expression in AL detected in some animals, expression in CC, CA and GNG in few animals (at protein level). RFamide 3: Expressed in corpora cardiaca (CC), corpora allata (CA), antennal lobe (AL) and gnathal ganglion (GNG) (at protein level). Expression in AL detected in all animals, in CC, CA and GNG in most animals (at protein level). RFamide 5: Expressed in corpora cardiaca (CC), corpora allata (CA), antennal lobe (AL) and gnathal ganglion (GNG) (at protein level). Expression in AL detected in all animals, in CC, CA and in GNG in some animals (at protein level).

The protein resides in the secreted. Its function is as follows. In insects, FMRFamide and related peptides have modulatory actions at skeletal neuromuscular junctions, and peptides that are immunologically related to FMRFamide are released into the circulation from neurohemal organs. The polypeptide is FMRFamide-related peptides (Agrotis ipsilon (Black cutworm moth)).